The sequence spans 307 residues: Serine/threonine-protein phosphatase PP2A-1 catalytic subunit (307 aa).

Mn(2+) is bound by residues aspartate 54, histidine 56, aspartate 82, and asparagine 114. Histidine 115 functions as the Proton donor in the catalytic mechanism. 2 residues coordinate Mn(2+): histidine 164 and histidine 238. The disordered stretch occupies residues 286-307; that stretch reads FEPAPRRGAEGEVNRRTPDYFL. Residues 289 to 307 show a composition bias toward basic and acidic residues; sequence APRRGAEGEVNRRTPDYFL.

The protein belongs to the PPP phosphatase family. PP-2A subfamily. The cofactor is Mn(2+).

The catalysed reaction is O-phospho-L-seryl-[protein] + H2O = L-seryl-[protein] + phosphate. The enzyme catalyses O-phospho-L-threonyl-[protein] + H2O = L-threonyl-[protein] + phosphate. This is Serine/threonine-protein phosphatase PP2A-1 catalytic subunit from Acetabularia peniculus (Green alga).